Reading from the N-terminus, the 342-residue chain is Anthranilate phosphoribosyltransferase (342 aa).

5-phospho-alpha-D-ribose 1-diphosphate is bound by residues Gly90, 93–94 (GS), Thr98, 100–103 (NIST), 118–126 (KHGNRRATS), and Ser130. Gly90 contributes to the anthranilate binding site. Ser102 contributes to the Mg(2+) binding site. Asn121 serves as a coordination point for anthranilate. Residue Arg176 participates in anthranilate binding. Asp235 and Glu236 together coordinate Mg(2+).

Belongs to the anthranilate phosphoribosyltransferase family. As to quaternary structure, homodimer. Requires Mg(2+) as cofactor.

The catalysed reaction is N-(5-phospho-beta-D-ribosyl)anthranilate + diphosphate = 5-phospho-alpha-D-ribose 1-diphosphate + anthranilate. It participates in amino-acid biosynthesis; L-tryptophan biosynthesis; L-tryptophan from chorismate: step 2/5. In terms of biological role, catalyzes the transfer of the phosphoribosyl group of 5-phosphorylribose-1-pyrophosphate (PRPP) to anthranilate to yield N-(5'-phosphoribosyl)-anthranilate (PRA). The chain is Anthranilate phosphoribosyltransferase from Rhodopirellula baltica (strain DSM 10527 / NCIMB 13988 / SH1).